The primary structure comprises 497 residues: MSNQHIEELNDQQIVRREKMMALAEQGIDPFGKRFDRTANSAELKEKYADKTKEELHELNETAIVAGRLMTKRGKGKVGFAHLQDREGQIQLYVRKDSVSEDNYEIFKKADLGDFIGVEGEVMRTDMGELSIKATKLTHLSKSLRPLPEKFHGLTDIETIYRKRHLDLISNRESFDRFVTRSKMISEIRRYLDGLDFLEVETPVLHNEAGGAAARPFVTHHNAQNIDMVLRIATELHLKRLIVGGMERVYEIGRIFRNEGMDATHNPEFTSIEVYQAYADYLDIMNLTEGIIQHAAKAVKGDGPIDYQGTEIRINEPFKRVHMVDAIKEVTGVDFWPEMTVEEAIALAKEKQVPLEKHFTSVGHIINAFFEEFVEETLVQPTFVFGHPVEVSPLAKKNPEDTRFTDRFELFIMTKEYANAFTELNDPIDQLSRFEAQAQAKELGDDEATGIDYDFVEALEYGMPPTGGLGIGIDRLCMLLTNTTTIRDVLLFPTMKP.

Residues Glu-409 and Glu-416 each coordinate Mg(2+).

It belongs to the class-II aminoacyl-tRNA synthetase family. In terms of assembly, homodimer. Requires Mg(2+) as cofactor.

It is found in the cytoplasm. It catalyses the reaction tRNA(Lys) + L-lysine + ATP = L-lysyl-tRNA(Lys) + AMP + diphosphate. This Streptococcus pyogenes serotype M6 (strain ATCC BAA-946 / MGAS10394) protein is Lysine--tRNA ligase.